The chain runs to 335 residues: Nuclear envelope-associated protein 2 (335 aa).

Coiled-coil stretches lie at residues 55 to 85 (RKEAEKKAKNMEMEICKLQKKLEDRNCELVA) and 125 to 260 (CSVL…LKKK). Residues 239–260 (KTKELESQLERQRRADQELKKK) carry the Bipartite nuclear localization signal motif. Residues 312–329 (FWDTSGFKIVVSMSMLIL) form a helical membrane-spanning segment.

Forms homomers and heteromers with NEAP1 and NEAP3. Interacts with SUN1 and SUN2.

It localises to the nucleus inner membrane. It is found in the nucleus. The protein localises to the nucleoplasm. The protein is Nuclear envelope-associated protein 2 of Arabidopsis thaliana (Mouse-ear cress).